The sequence spans 479 residues: Poly(A) polymerase catalytic subunit (479 aa).

Active-site residues include Asp-202 and Asp-204. Residues Asp-202, Asp-204, and Asp-253 each coordinate Ca(2+).

Belongs to the poxviridae poly(A) polymerase catalytic subunit family. Heterodimer of a large (catalytic) subunit and a small (regulatory) subunit.

The enzyme catalyses RNA(n) + ATP = RNA(n)-3'-adenine ribonucleotide + diphosphate. Its function is as follows. Polymerase that creates the 3'-poly(A) tail of mRNA's. This is Poly(A) polymerase catalytic subunit (OPG063) from Homo sapiens (Human).